Here is a 331-residue protein sequence, read N- to C-terminus: 7,8-didemethyl-8-hydroxy-5-deazariboflavin synthase (331 aa).

Residues 6 to 244 (ITFSKNAFLP…ADVAVQIPPN (239 aa)) enclose the Radical SAM core domain. [4Fe-4S] cluster contacts are provided by C20, C24, and C27.

This sequence belongs to the radical SAM superfamily. CofG family. Consists of two subunits, CofG and CofH. [4Fe-4S] cluster serves as cofactor.

The catalysed reaction is 5-amino-5-(4-hydroxybenzyl)-6-(D-ribitylimino)-5,6-dihydrouracil + S-adenosyl-L-methionine = 7,8-didemethyl-8-hydroxy-5-deazariboflavin + 5'-deoxyadenosine + L-methionine + NH4(+) + H(+). The protein operates within cofactor biosynthesis; coenzyme F0 biosynthesis. Catalyzes the radical-mediated synthesis of 7,8-didemethyl-8-hydroxy-5-deazariboflavin from 5-amino-5-(4-hydroxybenzyl)-6-(D-ribitylimino)-5,6-dihydrouracil. The polypeptide is 7,8-didemethyl-8-hydroxy-5-deazariboflavin synthase (Methanoculleus marisnigri (strain ATCC 35101 / DSM 1498 / JR1)).